The chain runs to 359 residues: Membrane-bound lytic murein transglycosylase C (359 aa).

The signal sequence occupies residues 1-16 (MKKYLALALIAPLLIS). The N-palmitoyl cysteine moiety is linked to residue Cys-17. Cys-17 carries S-diacylglycerol cysteine lipidation.

This sequence belongs to the transglycosylase Slt family.

It localises to the cell outer membrane. It carries out the reaction Exolytic cleavage of the (1-&gt;4)-beta-glycosidic linkage between N-acetylmuramic acid (MurNAc) and N-acetylglucosamine (GlcNAc) residues in peptidoglycan, from either the reducing or the non-reducing ends of the peptidoglycan chains, with concomitant formation of a 1,6-anhydrobond in the MurNAc residue.. Its function is as follows. Murein-degrading enzyme. May play a role in recycling of muropeptides during cell elongation and/or cell division. This Escherichia coli O7:K1 (strain IAI39 / ExPEC) protein is Membrane-bound lytic murein transglycosylase C.